We begin with the raw amino-acid sequence, 474 residues long: 3-isopropylmalate dehydratase large subunit (474 aa).

The [4Fe-4S] cluster site is built by Cys353, Cys414, and Cys417.

This sequence belongs to the aconitase/IPM isomerase family. LeuC type 1 subfamily. Heterodimer of LeuC and LeuD. The cofactor is [4Fe-4S] cluster.

It catalyses the reaction (2R,3S)-3-isopropylmalate = (2S)-2-isopropylmalate. It participates in amino-acid biosynthesis; L-leucine biosynthesis; L-leucine from 3-methyl-2-oxobutanoate: step 2/4. Functionally, catalyzes the isomerization between 2-isopropylmalate and 3-isopropylmalate, via the formation of 2-isopropylmaleate. In Pseudomonas paraeruginosa (strain DSM 24068 / PA7) (Pseudomonas aeruginosa (strain PA7)), this protein is 3-isopropylmalate dehydratase large subunit.